The primary structure comprises 79 residues: Protein NOI4 (79 aa).

The segment at Lys31–Trp68 is disordered. At Ser44 the chain carries Phosphoserine.

It belongs to the RIN4 family. Post-translationally, proteolytic cleaved by P.syringae pv tomato AvrRpt2 after Gly-12; this cleavage is critical for subsequent proteasome-dependent elimination.

The sequence is that of Protein NOI4 from Arabidopsis thaliana (Mouse-ear cress).